A 134-amino-acid polypeptide reads, in one-letter code: MSTTFCSSVSMQATSLAATTRISFQKPGLVSRTNLSFNLRRSIPTRLSVSCAAKPETVEKVSKIVKKQLSLKDDQKVVAETKFADLGADSLDTVEIVMGLEEEFDIEMAEEKAQKIATVEEAAELIEELVQAKK.

The N-terminal 51 residues, 1 to 51 (MSTTFCSSVSMQATSLAATTRISFQKPGLVSRTNLSFNLRRSIPTRLSVSC), are a transit peptide targeting the chloroplast. One can recognise a Carrier domain in the interval 55–130 (PETVEKVSKI…EAAELIEELV (76 aa)). Position 90 is an O-(pantetheine 4'-phosphoryl)serine (serine 90).

This sequence belongs to the acyl carrier protein (ACP) family. In terms of processing, 4'-phosphopantetheine is transferred from CoA to a specific serine of apo-ACP by acpS. This modification is essential for activity because fatty acids are bound in thioester linkage to the sulfhydryl of the prosthetic group. As to expression, seed.

It localises to the plastid. The protein localises to the chloroplast. Its pathway is lipid metabolism; fatty acid biosynthesis. Carrier of the growing fatty acid chain in fatty acid biosynthesis. The chain is Acyl carrier protein, chloroplastic (ACL1.A2) from Brassica napus (Rape).